We begin with the raw amino-acid sequence, 275 residues long: Dermonecrotic toxin LhSicTox-alphaVI1i (275 aa).

Residue His5 is part of the active site. Positions 25 and 27 each coordinate Mg(2+). The active-site Nucleophile is the His41. Intrachain disulfides connect Cys45–Cys51 and Cys47–Cys192. Asp85 serves as a coordination point for Mg(2+).

Belongs to the arthropod phospholipase D family. Class II subfamily. Mg(2+) is required as a cofactor. As to expression, expressed by the venom gland.

It localises to the secreted. It carries out the reaction an N-(acyl)-sphingosylphosphocholine = an N-(acyl)-sphingosyl-1,3-cyclic phosphate + choline. The enzyme catalyses an N-(acyl)-sphingosylphosphoethanolamine = an N-(acyl)-sphingosyl-1,3-cyclic phosphate + ethanolamine. The catalysed reaction is a 1-acyl-sn-glycero-3-phosphocholine = a 1-acyl-sn-glycero-2,3-cyclic phosphate + choline. It catalyses the reaction a 1-acyl-sn-glycero-3-phosphoethanolamine = a 1-acyl-sn-glycero-2,3-cyclic phosphate + ethanolamine. Functionally, dermonecrotic toxins cleave the phosphodiester linkage between the phosphate and headgroup of certain phospholipids (sphingolipid and lysolipid substrates), forming an alcohol (often choline) and a cyclic phosphate. This toxin acts on sphingomyelin (SM). It may also act on ceramide phosphoethanolamine (CPE), lysophosphatidylcholine (LPC) and lysophosphatidylethanolamine (LPE), but not on lysophosphatidylserine (LPS), and lysophosphatidylglycerol (LPG). It acts by transphosphatidylation, releasing exclusively cyclic phosphate products as second products. Induces dermonecrosis, hemolysis, increased vascular permeability, edema, inflammatory response, and platelet aggregation. This is Dermonecrotic toxin LhSicTox-alphaVI1i from Loxosceles hirsuta (Recluse spider).